The sequence spans 447 residues: Asparagine--tRNA ligase (447 aa).

The protein belongs to the class-II aminoacyl-tRNA synthetase family. Homodimer.

The protein resides in the cytoplasm. The enzyme catalyses tRNA(Asn) + L-asparagine + ATP = L-asparaginyl-tRNA(Asn) + AMP + diphosphate + H(+). The sequence is that of Asparagine--tRNA ligase from Streptococcus pneumoniae (strain ATCC BAA-255 / R6).